Consider the following 390-residue polypeptide: Altered inheritance of mitochondria protein 6 (390 aa).

A signal peptide spans 1–26 (MLGLKGCLTILIGYVIAVCALFSSRG).

The protein belongs to the AIM6 family.

The chain is Altered inheritance of mitochondria protein 6 (AIM6) from Saccharomyces cerevisiae (strain YJM789) (Baker's yeast).